The chain runs to 308 residues: uncharacterized protein (308 aa).

The region spanning 15–81 (MRVDTGLARL…QNTPIDIEGM (67 aa)) is the S4 RNA-binding domain. The active site involves Asp-139.

Belongs to the pseudouridine synthase RluA family.

It carries out the reaction a uridine in RNA = a pseudouridine in RNA. This is an uncharacterized protein from Mycobacterium tuberculosis (strain CDC 1551 / Oshkosh).